The following is a 181-amino-acid chain: RNA-binding protein (181 aa).

Residues 106 to 181 (FLTSVNPGES…DANTRKSKRK (76 aa)) are disordered. Over residues 141 to 157 (RNSKKGAKKSSSARKKK) the composition is skewed to basic residues. A compositionally biased stretch (low complexity) spans 160 to 172 (SSNSETDLSSDSD).

Belongs to the phytoreovirus RNA-binding protein family.

It localises to the host cytoplasm. In terms of biological role, constituent of viral factories. Binds to ssRNA and dsRNA. This is RNA-binding protein from Rice dwarf virus (isolate Akita) (RDV).